The sequence spans 215 residues: Chaperone protein TorD (215 aa).

This sequence belongs to the TorD/DmsD family. TorD subfamily.

It localises to the cytoplasm. Its function is as follows. Involved in the biogenesis of TorA. Acts on TorA before the insertion of the molybdenum cofactor and, as a result, probably favors a conformation of the apoenzyme that is competent for acquiring the cofactor. This is Chaperone protein TorD from Aliivibrio salmonicida (strain LFI1238) (Vibrio salmonicida (strain LFI1238)).